Here is a 128-residue protein sequence, read N- to C-terminus: Large ribosomal subunit protein uL22 (128 aa).

Belongs to the universal ribosomal protein uL22 family. Part of the 50S ribosomal subunit.

In terms of biological role, this protein binds specifically to 23S rRNA; its binding is stimulated by other ribosomal proteins, e.g. L4, L17, and L20. It is important during the early stages of 50S assembly. It makes multiple contacts with different domains of the 23S rRNA in the assembled 50S subunit and ribosome. Its function is as follows. The globular domain of the protein is located near the polypeptide exit tunnel on the outside of the subunit, while an extended beta-hairpin is found that lines the wall of the exit tunnel in the center of the 70S ribosome. This chain is Large ribosomal subunit protein uL22, found in Prochlorococcus marinus (strain MIT 9301).